Here is a 635-residue protein sequence, read N- to C-terminus: MTALHSVSKTPAIKEEEEDGDERDGRGVPLGPRNHDYRGRKGDEESGADTVTSPITFEKKKIAPRASTHSEQSILSSISLKSMVNQHRQQQLQQESSTGAGTGFVDRKQQIQSPAMVSILRKNSAEENVRSSHSSKLGEGQIDGRKASASKEIGKTLPFTDDQRSNPELDPTNSVVDVSRGKNTKSKTVFNELEDDADDDDEVRQKNLTTQALRKLSSFKMNASSNLRLSKENKAKESSSSSTSSVSSSSTSKVENIVDKLTTTNSSSMSQLRFGNTNVIIDSVNHAAKPPHQQMLRKPSLEFLPQPASSTNLNFNSNKHKSNVRQISNPKKPLYIPAVLRKVSETNITNDDLLNATLSSYYKKASNLEHGFNPSKSQSASVQNANNLRIISSQSSVQSNTSSILESYKNKISSYLFPNSIPNSDRINLIPTISNRNSARVNPPTKDHWIPDSKRNSCRYCHKPFTLWERKHHCRHCGDIFCQDHLRHWLYLDSQANFIMINELNNGGINGGGTLCKICDDCLVEYENLSTTNHNANTNEDNINVEEGEDDDNDNRKKLRNYYKNRQMNALFRPKKGGSSQEHATVDRDTTTPIQVKSNDEEADNENTGGEQEEGNDVLGSVIGSVPANWNWSSF.

Residues 1–110 form a disordered region; sequence MTALHSVSKT…GTGFVDRKQQ (110 aa). A may play a role in attenuating TORC1 signaling region spans residues 1–164; it reads MTALHSVSKT…KTLPFTDDQR (164 aa). The segment covering 33–44 has biased composition (basic and acidic residues); it reads RNHDYRGRKGDE. 2 positions are modified to phosphoserine: Ser-46 and Ser-53. Thr-56 carries the phosphothreonine modification. A compositionally biased stretch (polar residues) spans 67 to 85; the sequence is STHSEQSILSSISLKSMVN. Ser-73, Ser-113, Ser-124, Ser-148, Ser-165, and Ser-174 each carry phosphoserine. Disordered regions lie at residues 123 to 181 and 224 to 254; these read NSAE…VSRG and SSNL…TSKV. Positions 238–254 are enriched in low complexity; it reads SSSSSTSSVSSSSTSKV. Residues Ser-300, Ser-309, and Ser-381 each carry the phosphoserine modification. The required for interaction with TORC1 stretch occupies residues 304–440; that stretch reads LPQPASSTNL…PTISNRNSAR (137 aa). Residues 452-527 form an FYVE-type; atypical zinc finger; that stretch reads DSKRNSCRYC…ICDDCLVEYE (76 aa). Cys-458, Cys-461, Cys-474, Cys-477, Cys-482, His-485, Cys-519, and Cys-522 together coordinate Zn(2+). 2 disordered regions span residues 534 to 557 and 570 to 623; these read HNAN…DNRK and ALFR…GSVI. 2 stretches are compositionally biased toward acidic residues: residues 543–553 and 601–616; these read INVEEGEDDDN and EEAD…EEGN. Residues 620-635 are may be required for TORC1 activation; the sequence is GSVIGSVPANWNWSSF.

As to quaternary structure, interacts with the TORC1 complex when activated by glutamine or cysteine. Interacts with TOR1; glutamine enhances the interaction. Interacts with KOG1; glutamine enhances the interaction. Interacts with TCO89. Interacts with LST8; glutamine enhances the interaction. Interacts with TOR2; glutamine enhances the interaction.

It localises to the vacuole membrane. Activated by glutamine. May also be activated by cysteine. Functions as an intracellular glutamine sensor that directly activates the TORC1 signaling pathway, to promote cell growth when glutamine is available. May play a role in repressing NPR1 activity independently of TORC1 signaling. The polypeptide is Glutamine sensor PIB2 (Saccharomyces cerevisiae (strain ATCC 204508 / S288c) (Baker's yeast)).